Here is a 432-residue protein sequence, read N- to C-terminus: Cyclic di-GMP phosphodiesterase CdgJ (432 aa).

Residues 1-232 (MVRCLWAAEC…QRYVSPEHVI (232 aa)) form the EAL domain. One can recognise an HDOD domain in the interval 226-413 (VSPEHVIAMQ…CLELGFDLED (188 aa)).

The enzyme catalyses 3',3'-c-di-GMP + H2O = 5'-phosphoguanylyl(3'-&gt;5')guanosine + H(+). In terms of biological role, phosphodiesterase (PDE) that catalyzes the hydrolysis of cyclic diguanylate (c-di-GMP). Positively regulates motility and negatively regulates biofilm formation. In Vibrio cholerae serotype O1 (strain ATCC 39315 / El Tor Inaba N16961), this protein is Cyclic di-GMP phosphodiesterase CdgJ.